We begin with the raw amino-acid sequence, 98 residues long: Small ribosomal subunit protein bS6 (98 aa).

This sequence belongs to the bacterial ribosomal protein bS6 family.

Functionally, binds together with bS18 to 16S ribosomal RNA. This Limosilactobacillus reuteri (strain DSM 20016) (Lactobacillus reuteri) protein is Small ribosomal subunit protein bS6.